The primary structure comprises 87 residues: uncharacterized protein (87 aa).

The helical transmembrane segment at 48-70 (GIYIPHTLIFWMCPRAMGTAITF) threads the bilayer.

The protein resides in the host membrane. This is an uncharacterized protein from Gallid herpesvirus 2 (strain Chicken/Md5/ATCC VR-987) (GaHV-2).